Consider the following 135-residue polypeptide: uncharacterized protein (135 aa).

The region spanning 2–71 is the HTH merR-type domain; the sequence is TYTTAKAAEK…LKDIKRFAEC (70 aa). Positions 5–24 form a DNA-binding region, H-T-H motif; the sequence is TAKAAEKIGISAYTLRFYDK.

This is an uncharacterized protein from Haemophilus influenzae (strain ATCC 51907 / DSM 11121 / KW20 / Rd).